The sequence spans 445 residues: Phosphoglucosamine mutase (445 aa).

Catalysis depends on serine 102, which acts as the Phosphoserine intermediate. Residues serine 102, aspartate 241, aspartate 243, and aspartate 245 each contribute to the Mg(2+) site. A Phosphoserine modification is found at serine 102.

Belongs to the phosphohexose mutase family. Requires Mg(2+) as cofactor. In terms of processing, activated by phosphorylation.

It carries out the reaction alpha-D-glucosamine 1-phosphate = D-glucosamine 6-phosphate. Functionally, catalyzes the conversion of glucosamine-6-phosphate to glucosamine-1-phosphate. The chain is Phosphoglucosamine mutase from Haemophilus influenzae (strain PittEE).